The chain runs to 264 residues: 14-3-3-like protein GF14-A (264 aa).

The tract at residues 245 to 264 is disordered; the sequence is DMQDDGGDEMRDATKPEDEH. Basic and acidic residues predominate over residues 252–264; the sequence is DEMRDATKPEDEH.

It belongs to the 14-3-3 family.

Its function is as follows. Is associated with a DNA binding complex that binds to the G box, a well-characterized cis-acting DNA regulatory element found in plant genes. This chain is 14-3-3-like protein GF14-A (GF14A), found in Oryza sativa subsp. japonica (Rice).